The primary structure comprises 334 residues: Holliday junction branch migration complex subunit RuvB (334 aa).

The tract at residues Ala4 to Tyr184 is large ATPase domain (RuvB-L). Residues Arg24, Gly65, Lys68, Thr69, Thr70, Glu131–Tyr133, Arg174, Tyr184, and Arg221 contribute to the ATP site. Residue Thr69 coordinates Mg(2+). The tract at residues Asn185–Asp255 is small ATPAse domain (RuvB-S). Residues Ser258–Glu334 are head domain (RuvB-H). Positions 294, 313, and 318 each coordinate DNA.

This sequence belongs to the RuvB family. In terms of assembly, homohexamer. Forms an RuvA(8)-RuvB(12)-Holliday junction (HJ) complex. HJ DNA is sandwiched between 2 RuvA tetramers; dsDNA enters through RuvA and exits via RuvB. An RuvB hexamer assembles on each DNA strand where it exits the tetramer. Each RuvB hexamer is contacted by two RuvA subunits (via domain III) on 2 adjacent RuvB subunits; this complex drives branch migration. In the full resolvosome a probable DNA-RuvA(4)-RuvB(12)-RuvC(2) complex forms which resolves the HJ.

The protein resides in the cytoplasm. It carries out the reaction ATP + H2O = ADP + phosphate + H(+). In terms of biological role, the RuvA-RuvB-RuvC complex processes Holliday junction (HJ) DNA during genetic recombination and DNA repair, while the RuvA-RuvB complex plays an important role in the rescue of blocked DNA replication forks via replication fork reversal (RFR). RuvA specifically binds to HJ cruciform DNA, conferring on it an open structure. The RuvB hexamer acts as an ATP-dependent pump, pulling dsDNA into and through the RuvAB complex. RuvB forms 2 homohexamers on either side of HJ DNA bound by 1 or 2 RuvA tetramers; 4 subunits per hexamer contact DNA at a time. Coordinated motions by a converter formed by DNA-disengaged RuvB subunits stimulates ATP hydrolysis and nucleotide exchange. Immobilization of the converter enables RuvB to convert the ATP-contained energy into a lever motion, pulling 2 nucleotides of DNA out of the RuvA tetramer per ATP hydrolyzed, thus driving DNA branch migration. The RuvB motors rotate together with the DNA substrate, which together with the progressing nucleotide cycle form the mechanistic basis for DNA recombination by continuous HJ branch migration. Branch migration allows RuvC to scan DNA until it finds its consensus sequence, where it cleaves and resolves cruciform DNA. This Shewanella baltica (strain OS195) protein is Holliday junction branch migration complex subunit RuvB.